Reading from the N-terminus, the 482-residue chain is UDP-N-acetylmuramoyl-L-alanyl-D-glutamate--2,6-diaminopimelate ligase (482 aa).

A UDP-N-acetyl-alpha-D-muramoyl-L-alanyl-D-glutamate-binding site is contributed by S29. ATP is bound at residue 109 to 115; sequence GTNGKTS. Residues 151–152, S178, and R186 each bind UDP-N-acetyl-alpha-D-muramoyl-L-alanyl-D-glutamate; that span reads TT. At K218 the chain carries N6-carboxylysine. Residues R375, 399-402, G451, and E455 contribute to the meso-2,6-diaminopimelate site; that span reads DNPR. The short motif at 399-402 is the Meso-diaminopimelate recognition motif element; the sequence is DNPR.

The protein belongs to the MurCDEF family. MurE subfamily. Requires Mg(2+) as cofactor. Carboxylation is probably crucial for Mg(2+) binding and, consequently, for the gamma-phosphate positioning of ATP.

It is found in the cytoplasm. It catalyses the reaction UDP-N-acetyl-alpha-D-muramoyl-L-alanyl-D-glutamate + meso-2,6-diaminopimelate + ATP = UDP-N-acetyl-alpha-D-muramoyl-L-alanyl-gamma-D-glutamyl-meso-2,6-diaminopimelate + ADP + phosphate + H(+). It functions in the pathway cell wall biogenesis; peptidoglycan biosynthesis. In terms of biological role, catalyzes the addition of meso-diaminopimelic acid to the nucleotide precursor UDP-N-acetylmuramoyl-L-alanyl-D-glutamate (UMAG) in the biosynthesis of bacterial cell-wall peptidoglycan. In Caldanaerobacter subterraneus subsp. tengcongensis (strain DSM 15242 / JCM 11007 / NBRC 100824 / MB4) (Thermoanaerobacter tengcongensis), this protein is UDP-N-acetylmuramoyl-L-alanyl-D-glutamate--2,6-diaminopimelate ligase.